Reading from the N-terminus, the 253-residue chain is UPF0280 protein Mbar_A3697 (253 aa).

It belongs to the UPF0280 family.

The protein is UPF0280 protein Mbar_A3697 of Methanosarcina barkeri (strain Fusaro / DSM 804).